A 120-amino-acid chain; its full sequence is NADH-ubiquinone oxidoreductase chain 3 (120 aa).

3 helical membrane passes run 7–27 (FVYILVLLAISTGLSVILFFL), 62–82 (FYLVAILFLIFDLEITFLFPF), and 89–109 (MTLLSYSLMLIFLIILTIGFI).

It belongs to the complex I subunit 3 family.

It localises to the mitochondrion membrane. It carries out the reaction a ubiquinone + NADH + 5 H(+)(in) = a ubiquinol + NAD(+) + 4 H(+)(out). In terms of biological role, core subunit of the mitochondrial membrane respiratory chain NADH dehydrogenase (Complex I) that is believed to belong to the minimal assembly required for catalysis. Complex I functions in the transfer of electrons from NADH to the respiratory chain. The immediate electron acceptor for the enzyme is believed to be ubiquinone. This Dictyostelium discoideum (Social amoeba) protein is NADH-ubiquinone oxidoreductase chain 3 (nad3).